We begin with the raw amino-acid sequence, 376 residues long: Glutamate 5-kinase (376 aa).

An ATP-binding site is contributed by Lys15. Substrate contacts are provided by Ser56, Asp143, and Asn155. 175-176 (SD) lines the ATP pocket. The PUA domain maps to 281–358 (KGTLTIDAGA…PDVMSILGVS (78 aa)).

It belongs to the glutamate 5-kinase family.

The protein resides in the cytoplasm. The catalysed reaction is L-glutamate + ATP = L-glutamyl 5-phosphate + ADP. It participates in amino-acid biosynthesis; L-proline biosynthesis; L-glutamate 5-semialdehyde from L-glutamate: step 1/2. Its function is as follows. Catalyzes the transfer of a phosphate group to glutamate to form L-glutamate 5-phosphate. This chain is Glutamate 5-kinase, found in Rhodopseudomonas palustris (strain HaA2).